The chain runs to 152 residues: Regulatory protein RecX (152 aa).

It belongs to the RecX family.

The protein resides in the cytoplasm. Its function is as follows. Modulates RecA activity. The polypeptide is Regulatory protein RecX (Chromohalobacter salexigens (strain ATCC BAA-138 / DSM 3043 / CIP 106854 / NCIMB 13768 / 1H11)).